Here is a 1148-residue protein sequence, read N- to C-terminus: Putative transcription factor SEF1 (1148 aa).

The interval 1 to 51 is disordered; that stretch reads MVKDNRDSDQDQDFSSAHMKRQPEQQQLQQHQFPSKKQRISHHDDSHQINH. The residue at position 8 (Ser8) is a Phosphoserine. A DNA-binding region (zn(2)-C6 fungal-type) is located at residues 57–87; sequence CTHCRQHKIKCDASQNFPHPCSRCEKIGLHC. The disordered stretch occupies residues 148–180; it reads PTPGTIIPNPDSSPSSGSPTSSAAQRDSKVSVQ. A compositionally biased stretch (low complexity) spans 150–169; the sequence is PGTIIPNPDSSPSSGSPTSS. Residue Ser263 is modified to Phosphoserine. The segment at 524-550 is disordered; it reads EESEEDNNDSIDNNNNDKRNKKDEPHV. The segment covering 538 to 550 has biased composition (basic and acidic residues); that stretch reads NNDKRNKKDEPHV. Ser806 is subject to Phosphoserine. Residues 1029–1050 are compositionally biased toward polar residues; the sequence is RSQSSMSHSRTPIASKSNNMTD. A disordered region spans residues 1029–1063; that stretch reads RSQSSMSHSRTPIASKSNNMTDLHSVVSDPGSSKS.

It is found in the nucleus. Its function is as follows. Putative transcription factor that seems to be involved in the sporulation process. Suppresses the lethal phenotype of RPM2 deletion. The polypeptide is Putative transcription factor SEF1 (SEF1) (Saccharomyces cerevisiae (strain ATCC 204508 / S288c) (Baker's yeast)).